Consider the following 242-residue polypeptide: Pyridoxine 5'-phosphate synthase (242 aa).

Asn7 lines the 3-amino-2-oxopropyl phosphate pocket. 9–10 is a 1-deoxy-D-xylulose 5-phosphate binding site; the sequence is DH. Arg18 is a binding site for 3-amino-2-oxopropyl phosphate. The active-site Proton acceptor is the His44. Positions 46 and 51 each coordinate 1-deoxy-D-xylulose 5-phosphate. Glu71 (proton acceptor) is an active-site residue. Thr101 provides a ligand contact to 1-deoxy-D-xylulose 5-phosphate. His192 functions as the Proton donor in the catalytic mechanism. 3-amino-2-oxopropyl phosphate contacts are provided by residues Gly193 and 214 to 215; that span reads GH.

Belongs to the PNP synthase family. Homooctamer; tetramer of dimers.

Its subcellular location is the cytoplasm. The catalysed reaction is 3-amino-2-oxopropyl phosphate + 1-deoxy-D-xylulose 5-phosphate = pyridoxine 5'-phosphate + phosphate + 2 H2O + H(+). It participates in cofactor biosynthesis; pyridoxine 5'-phosphate biosynthesis; pyridoxine 5'-phosphate from D-erythrose 4-phosphate: step 5/5. Catalyzes the complicated ring closure reaction between the two acyclic compounds 1-deoxy-D-xylulose-5-phosphate (DXP) and 3-amino-2-oxopropyl phosphate (1-amino-acetone-3-phosphate or AAP) to form pyridoxine 5'-phosphate (PNP) and inorganic phosphate. The sequence is that of Pyridoxine 5'-phosphate synthase from Synechocystis sp. (strain ATCC 27184 / PCC 6803 / Kazusa).